The sequence spans 179 residues: Large ribosomal subunit protein uL5 (179 aa).

Belongs to the universal ribosomal protein uL5 family. Part of the 50S ribosomal subunit; contacts the 5S rRNA and probably tRNA. Forms a bridge to the 30S subunit in the 70S ribosome.

In terms of biological role, this is one of the proteins that bind and probably mediate the attachment of the 5S RNA into the large ribosomal subunit, where it forms part of the central protuberance. In the 70S ribosome it contacts protein S13 of the 30S subunit (bridge B1b), connecting the 2 subunits; this bridge is implicated in subunit movement. May contact the P site tRNA; the 5S rRNA and some of its associated proteins might help stabilize positioning of ribosome-bound tRNAs. The sequence is that of Large ribosomal subunit protein uL5 from Pyrobaculum aerophilum (strain ATCC 51768 / DSM 7523 / JCM 9630 / CIP 104966 / NBRC 100827 / IM2).